We begin with the raw amino-acid sequence, 460 residues long: Argininosuccinate lyase (460 aa).

Belongs to the lyase 1 family. Argininosuccinate lyase subfamily.

The protein localises to the cytoplasm. It catalyses the reaction 2-(N(omega)-L-arginino)succinate = fumarate + L-arginine. Its pathway is amino-acid biosynthesis; L-arginine biosynthesis; L-arginine from L-ornithine and carbamoyl phosphate: step 3/3. The sequence is that of Argininosuccinate lyase from Actinobacillus succinogenes (strain ATCC 55618 / DSM 22257 / CCUG 43843 / 130Z).